Here is a 325-residue protein sequence, read N- to C-terminus: Glutarate 2-hydroxylase (325 aa).

Residues His160, Asp162, and His292 each coordinate Fe cation.

The protein belongs to the glutarate hydroxylase family. Homotetramer. It depends on Fe(2+) as a cofactor.

It catalyses the reaction glutarate + 2-oxoglutarate + O2 = (S)-2-hydroxyglutarate + succinate + CO2. The protein operates within amino-acid degradation. In terms of biological role, acts as an alpha-ketoglutarate-dependent dioxygenase catalyzing hydroxylation of glutarate (GA) to L-2-hydroxyglutarate (L2HG). Functions in a L-lysine degradation pathway that proceeds via cadaverine, glutarate and L-2-hydroxyglutarate. This is Glutarate 2-hydroxylase from Escherichia coli (strain 55989 / EAEC).